The chain runs to 127 residues: Small ribosomal subunit protein uS13 (127 aa).

The segment covering 95–118 (GLPVRGQRTHTNARTRKGPKKGLV) has biased composition (basic residues). The segment at 95–127 (GLPVRGQRTHTNARTRKGPKKGLVRKAAAPAPK) is disordered.

The protein belongs to the universal ribosomal protein uS13 family. As to quaternary structure, part of the 30S ribosomal subunit. Forms a loose heterodimer with protein S19. Forms two bridges to the 50S subunit in the 70S ribosome.

Its function is as follows. Located at the top of the head of the 30S subunit, it contacts several helices of the 16S rRNA. In the 70S ribosome it contacts the 23S rRNA (bridge B1a) and protein L5 of the 50S subunit (bridge B1b), connecting the 2 subunits; these bridges are implicated in subunit movement. Contacts the tRNAs in the A and P-sites. The chain is Small ribosomal subunit protein uS13 from Anaeromyxobacter sp. (strain Fw109-5).